The following is a 183-amino-acid chain: Large ribosomal subunit protein uL6 (183 aa).

This sequence belongs to the universal ribosomal protein uL6 family. In terms of assembly, part of the 50S ribosomal subunit.

This protein binds to the 23S rRNA, and is important in its secondary structure. It is located near the subunit interface in the base of the L7/L12 stalk, and near the tRNA binding site of the peptidyltransferase center. The protein is Large ribosomal subunit protein uL6 of Porphyromonas gingivalis (strain ATCC 33277 / DSM 20709 / CIP 103683 / JCM 12257 / NCTC 11834 / 2561).